Consider the following 368-residue polypeptide: MLYYFLKYINDIYHFPALRVIDYLTFRASAAAITALLITLLIGPKLIAYLKQRIIEPIKEEAPPEHRKKKQLPTMGGLLIIFAFELSVFLWAKVDSPHVWLVMVAVLWMGAVGFLDDYLKVVKKVKGGLAAHYKLIGQVLLGLLVGLYAWFDPSMAVLRDTTTVPFFKNLTINYGIFYVPVVIFIITAISNAVNLTDGLDGLAAGTSAIAFIGLAGFAYLAGNAVYATYLNIPFIQGGGEVAIVSMALVMACVGFLWFNSNPAEIIMGDTGSLALGSAMAVIALLIKQELLLPLMAGVFVLETFSVSLQVLYFKYTRKRTGEGKRIFLMAPLHHHFQLKGWAEQKIVIRFWIMAILFFLASLMTLKLR.

Helical transmembrane passes span 30–50, 72–92, 99–119, 135–155, 170–190, 201–221, 238–258, 265–286, and 345–365; these read AAAI…IAYL, LPTM…FLWA, VWLV…DDYL, LIGQ…DPSM, LTIN…TAIS, GLAA…AYLA, GGEV…FLWF, IIMG…ALLI, and KIVI…LMTL.

Belongs to the glycosyltransferase 4 family. MraY subfamily. The cofactor is Mg(2+).

Its subcellular location is the cell inner membrane. The enzyme catalyses UDP-N-acetyl-alpha-D-muramoyl-L-alanyl-gamma-D-glutamyl-meso-2,6-diaminopimeloyl-D-alanyl-D-alanine + di-trans,octa-cis-undecaprenyl phosphate = di-trans,octa-cis-undecaprenyl diphospho-N-acetyl-alpha-D-muramoyl-L-alanyl-D-glutamyl-meso-2,6-diaminopimeloyl-D-alanyl-D-alanine + UMP. The protein operates within cell wall biogenesis; peptidoglycan biosynthesis. Its function is as follows. Catalyzes the initial step of the lipid cycle reactions in the biosynthesis of the cell wall peptidoglycan: transfers peptidoglycan precursor phospho-MurNAc-pentapeptide from UDP-MurNAc-pentapeptide onto the lipid carrier undecaprenyl phosphate, yielding undecaprenyl-pyrophosphoryl-MurNAc-pentapeptide, known as lipid I. This is Phospho-N-acetylmuramoyl-pentapeptide-transferase from Chlorobium chlorochromatii (strain CaD3).